The following is a 107-amino-acid chain: U1-lycotoxin-Ls1e (107 aa).

A signal peptide spans 1 to 20; it reads MMKVLVVVALLVTLISYSSS. Residues 21-41 constitute a propeptide that is removed on maturation; that stretch reads EGIDDLEADELLSLMANEQTR. 4 cysteine pairs are disulfide-bonded: cysteine 44/cysteine 59, cysteine 51/cysteine 68, cysteine 58/cysteine 86, and cysteine 70/cysteine 84.

Belongs to the neurotoxin 19 (CSTX) family. 04 (U1-Lctx) subfamily. Expressed by the venom gland.

It is found in the secreted. This is U1-lycotoxin-Ls1e from Lycosa singoriensis (Wolf spider).